The sequence spans 532 residues: Putative sodium-dependent excitatory amino acid transporter glt-3 (532 aa).

The Cytoplasmic portion of the chain corresponds to 1–5 (MGMKK). 3 helical membrane-spanning segments follow: residues 6–26 (DLLL…GFVI), 46–66 (FMQI…ISAL), and 83–103 (IYYM…VSSI). At 104-181 (HPGDPELIHE…SEVLHKQTLT (78 aa)) the chain is on the extracellular side. N-linked (GlcNAc...) asparagine glycans are attached at residues N164 and N169. Transmembrane regions (helical) follow at residues 182–202 (YTNE…GIIL), 222–242 (IIMR…LSLV), 264–284 (VTVI…LYFL), 352–372 (AVAV…MDLV), and 383–402 (IGSG…LTTV).

It belongs to the dicarboxylate/amino acid:cation symporter (DAACS) (TC 2.A.23) family.

The protein resides in the membrane. The sequence is that of Putative sodium-dependent excitatory amino acid transporter glt-3 (glt-3) from Caenorhabditis elegans.